The chain runs to 189 residues: Peptide deformylase (189 aa).

Residues Cys-116 and His-159 each contribute to the Fe cation site. Glu-160 is an active-site residue. Fe cation is bound at residue His-163.

It belongs to the polypeptide deformylase family. The cofactor is Fe(2+).

The catalysed reaction is N-terminal N-formyl-L-methionyl-[peptide] + H2O = N-terminal L-methionyl-[peptide] + formate. Removes the formyl group from the N-terminal Met of newly synthesized proteins. Requires at least a dipeptide for an efficient rate of reaction. N-terminal L-methionine is a prerequisite for activity but the enzyme has broad specificity at other positions. The polypeptide is Peptide deformylase (Limosilactobacillus fermentum (strain NBRC 3956 / LMG 18251) (Lactobacillus fermentum)).